The chain runs to 335 residues: HTH-type transcriptional regulator RipA (335 aa).

The 98-residue stretch at 119-216 (RKVAQKLIAY…GDTPSSFTSP (98 aa)) folds into the HTH araC/xylS-type domain. 2 consecutive DNA-binding regions (H-T-H motif) follow at residues 136–157 (LEFAQLHNISSRTLQRQFVAST) and 183–206 (IGQVSQMVGFSATSSLTRAFKRHT).

Under iron limitation, represses the acn (aconitase), catA (catechol 1,2 dioxygenase), leuCD (isopropylmalate dehydratase), narKGHJI (nitrite/nitrate transporter and nitrate reductase), sdhCAB (succinate dehydrogenase), pta (phosphotransacetylase) and katA (catalase) genes. This Corynebacterium diphtheriae (strain ATCC 700971 / NCTC 13129 / Biotype gravis) protein is HTH-type transcriptional regulator RipA.